A 135-amino-acid chain; its full sequence is Large ribosomal subunit protein uL16c (135 aa).

Over residues 1-17 (MLSPKRTRFRKQHRGRM) the composition is skewed to basic residues. The interval 1-20 (MLSPKRTRFRKQHRGRMKGT) is disordered.

This sequence belongs to the universal ribosomal protein uL16 family. Part of the 50S ribosomal subunit.

The protein resides in the plastid. Its subcellular location is the chloroplast. The protein is Large ribosomal subunit protein uL16c of Lemna minor (Common duckweed).